A 1058-amino-acid polypeptide reads, in one-letter code: Carbamoyl phosphate synthase large chain (1058 aa).

Positions 1–401 are carboxyphosphate synthetic domain; the sequence is MPKRKDIQKI…SLLKACRSLE (401 aa). Residues arginine 129, arginine 169, glycine 175, glycine 176, arginine 208, isoleucine 210, glutamate 215, glycine 241, isoleucine 242, histidine 243, glutamine 284, and glutamate 298 each contribute to the ATP site. In terms of domain architecture, ATP-grasp 1 spans 133 to 327; the sequence is KQLMQELDQP…IAKLAAKIAV (195 aa). Positions 284, 298, and 300 each coordinate Mg(2+). Residues glutamine 284, glutamate 298, and asparagine 300 each contribute to the Mn(2+) site. Positions 402–546 are oligomerization domain; sequence IGVCHNEMTS…YSTYELENES (145 aa). Residues 547 to 929 are carbamoyl phosphate synthetic domain; it reads VQSNKESILV…ALYKAFEANN (383 aa). The region spanning 671-861 is the ATP-grasp 2 domain; sequence EKALKELGIP…MAQIATKLIL (191 aa). The ATP site is built by arginine 707, serine 746, isoleucine 748, glutamate 752, glycine 777, valine 778, histidine 779, serine 780, glutamine 820, and glutamate 832. Residues glutamine 820, glutamate 832, and asparagine 834 each coordinate Mg(2+). Mn(2+) is bound by residues glutamine 820, glutamate 832, and asparagine 834. One can recognise an MGS-like domain in the interval 930-1058; the sequence is SHLSEFGQIV…ESRCFNIEAI (129 aa). Positions 930–1058 are allosteric domain; sequence SHLSEFGQIV…ESRCFNIEAI (129 aa).

Belongs to the CarB family. As to quaternary structure, composed of two chains; the small (or glutamine) chain promotes the hydrolysis of glutamine to ammonia, which is used by the large (or ammonia) chain to synthesize carbamoyl phosphate. Tetramer of heterodimers (alpha,beta)4. Requires Mg(2+) as cofactor. Mn(2+) is required as a cofactor.

The enzyme catalyses hydrogencarbonate + L-glutamine + 2 ATP + H2O = carbamoyl phosphate + L-glutamate + 2 ADP + phosphate + 2 H(+). It carries out the reaction hydrogencarbonate + NH4(+) + 2 ATP = carbamoyl phosphate + 2 ADP + phosphate + 2 H(+). The protein operates within amino-acid biosynthesis; L-arginine biosynthesis; carbamoyl phosphate from bicarbonate: step 1/1. It functions in the pathway pyrimidine metabolism; UMP biosynthesis via de novo pathway; (S)-dihydroorotate from bicarbonate: step 1/3. Functionally, large subunit of the glutamine-dependent carbamoyl phosphate synthetase (CPSase). CPSase catalyzes the formation of carbamoyl phosphate from the ammonia moiety of glutamine, carbonate, and phosphate donated by ATP, constituting the first step of 2 biosynthetic pathways, one leading to arginine and/or urea and the other to pyrimidine nucleotides. The large subunit (synthetase) binds the substrates ammonia (free or transferred from glutamine from the small subunit), hydrogencarbonate and ATP and carries out an ATP-coupled ligase reaction, activating hydrogencarbonate by forming carboxy phosphate which reacts with ammonia to form carbamoyl phosphate. The sequence is that of Carbamoyl phosphate synthase large chain from Streptococcus pyogenes serotype M3 (strain SSI-1).